The primary structure comprises 962 residues: Alpha-glucan phosphorylase 1 (962 aa).

A chloroplast-targeting transit peptide spans 1 to 63 (MDTMRISGVS…RSFLSVKSIS (63 aa)). The tract at residues 525-552 (AKDAQNGVKTEQEEEKTAGEEEEDEVIP) is disordered. Lys-808 bears the N6-(pyridoxal phosphate)lysine mark.

It belongs to the glycogen phosphorylase family. It depends on pyridoxal 5'-phosphate as a cofactor.

It localises to the plastid. The protein localises to the chloroplast stroma. The catalysed reaction is [(1-&gt;4)-alpha-D-glucosyl](n) + phosphate = [(1-&gt;4)-alpha-D-glucosyl](n-1) + alpha-D-glucose 1-phosphate. Functionally, phosphorylase is an important allosteric enzyme in carbohydrate metabolism. Enzymes from different sources differ in their regulatory mechanisms and in their natural substrates. However, all known phosphorylases share catalytic and structural properties. May be not required for the degradation of starch, but the phosphorolysis of starch may play an important role in water stress tolerance. The protein is Alpha-glucan phosphorylase 1 (PHS1) of Arabidopsis thaliana (Mouse-ear cress).